The sequence spans 269 residues: Glutamate racemase (269 aa).

Residues 14 to 15 (DS) and 46 to 47 (YS) each bind substrate. Catalysis depends on Cys-78, which acts as the Proton donor/acceptor. 79-80 (NT) serves as a coordination point for substrate. Cys-189 functions as the Proton donor/acceptor in the catalytic mechanism. 190-191 (TH) contributes to the substrate binding site.

This sequence belongs to the aspartate/glutamate racemases family.

The catalysed reaction is L-glutamate = D-glutamate. It functions in the pathway cell wall biogenesis; peptidoglycan biosynthesis. Provides the (R)-glutamate required for cell wall biosynthesis. In Haemophilus influenzae (strain ATCC 51907 / DSM 11121 / KW20 / Rd), this protein is Glutamate racemase.